A 2406-amino-acid chain; its full sequence is Highly reducing polyketide synthase dmxL2 (2406 aa).

The Ketosynthase family 3 (KS3) domain occupies 1–399 (MEAFWSASKK…GTNAHAVLDD (399 aa)). Cysteine 130 is a catalytic residue. Cysteine 130 acts as the For beta-ketoacyl synthase activity in catalysis. Positions 414–476 (GHASNGTNGT…GPTDGPTSRP (63 aa)) are disordered. Positions 417 to 448 (SNGTNGTLTNGHILNGEHTSNGMNGTLTNGHA) are enriched in polar residues. A malonyl-CoA:ACP transacylase (MAT) domain region spans residues 574 to 911 (FVFTGQGAQW…LAGSLFTQGY (338 aa)). The active-site For malonyltransferase activity is the serine 665. The segment at 962–1096 (PSLLGSPSPS…GLLVIEYEAA (135 aa)) is N-terminal hotdog fold. The PKS/mFAS DH domain maps to 962–1278 (PSLLGSPSPS…CAEIAGASSN (317 aa)). The interval 964-1273 (LLGSPSPSLA…IEGFLCAEIA (310 aa)) is dehydratase (DH) domain. Histidine 994 functions as the Proton acceptor; for dehydratase activity in the catalytic mechanism. The segment at 1124–1278 (VHRLDPSGFY…CAEIAGASSN (155 aa)) is C-terminal hotdog fold. Aspartate 1189 acts as the Proton donor; for dehydratase activity in catalysis. Positions 1694-2006 (GMLGSVCLEP…TGKHLGKIAL (313 aa)) are enoylreductase (ER) domain. The segment at 2032–2210 (GVYLLVGGLG…TTVDLGIMRD (179 aa)) is ketoreductase (KR) domain. One can recognise a Carrier domain in the interval 2318 to 2395 (EASDSVLEAL…TFCNRIAAKS (78 aa)). Serine 2355 bears the O-(pantetheine 4'-phosphoryl)serine mark.

The protein operates within secondary metabolite biosynthesis. In terms of biological role, highly reducing polyketide synthase; part of the gene cluster that mediates the biosynthesis of the dimeric xanthones cryptosporioptides. The pathway begins with the synthesis of atrochrysone thioester by the polyketide synthase dmx-nrPKS. The atrochrysone carboxyl ACP thioesterase dmxR1 then breaks the thioester bond and releases the atrochrysone carboxylic acid from dmx-nrPKS. Atrochrysone carboxylic acid is decarboxylated by the decarboxylase dmxR15, and oxidized by the anthrone oxygenase dmxR16 to yield emodin. Emodin is then reduced to emodin hydroquinone by the oxidoreductase dmxR7. A-ring reduction by the short chain dehydrogenase dmxR18, dehydration by the scytalone dehydratase-like protein dmxR17 and probable spontaneous re-oxidation, results in overall deoxygenation to chrysophanol. Baeyer-Villiger oxidation by the Baeyer-Villiger monooxygenase (BVMO) dmxR6 then yields monodictylactone in equilibrium with monodictyphenone. In the case of the cryptosporioptides biosynthesis, monodictylactone is reduced at C-12 to an alcohol (by the short chain dehydrogenases dmxR12 or dmxR8) and hydroxylated at C-5 by dmxR9, yielding the electron-rich aromatic which could eliminate H(2)O to form the ortho-quinonemethide, followed by tautomerisation to paraquinone and complete the formal reduction to produce the 10-methylgroup. Conjugate addition of C-4a-OH to the resulting paraquinone by the monooxygenase dmxR10 then gives cyclohexadienone, which is then reduced at C-5 by the short chain dehydrogenase dmxR3 to give the dihydroxanthone. The 6,7-epoxide in the cryptosporioptides could be introduced by the cytochrome P450 monooxygenase dmxL3. The highly reducing PKS dmxL2 manufactures butyrate, which is further carboxylated by dmxL1 to form ethylmalonate. It is not yet clear whether the carboxylation occurs while the butyrate is attached to the ACP of dmxL2, but this unusual fungal metabolite could then be esterified to O-5 by the O-acetyltransferase dmxR13. Finally, dimerization performed by dmxR5 gives the observed dimers cryptosporioptides A, B and C as the final products of the pathway. This chain is Highly reducing polyketide synthase dmxL2, found in Cryptosporiopsis sp. (strain 8999).